Here is a 42-residue protein sequence, read N- to C-terminus: Photosystem II reaction center protein J (42 aa).

Residues 10–30 (IPLWLVGTVAGILVLGLVGLF) traverse the membrane as a helical segment.

It belongs to the PsbJ family. PSII is composed of 1 copy each of membrane proteins PsbA, PsbB, PsbC, PsbD, PsbE, PsbF, PsbH, PsbI, PsbJ, PsbK, PsbL, PsbM, PsbT, PsbX, PsbY, PsbZ, Psb30/Ycf12, at least 3 peripheral proteins of the oxygen-evolving complex and a large number of cofactors. It forms dimeric complexes.

Its subcellular location is the plastid. It localises to the chloroplast thylakoid membrane. One of the components of the core complex of photosystem II (PSII). PSII is a light-driven water:plastoquinone oxidoreductase that uses light energy to abstract electrons from H(2)O, generating O(2) and a proton gradient subsequently used for ATP formation. It consists of a core antenna complex that captures photons, and an electron transfer chain that converts photonic excitation into a charge separation. This is Photosystem II reaction center protein J from Staurastrum punctulatum (Green alga).